The chain runs to 316 residues: Ribosomal RNA small subunit methyltransferase H (316 aa).

Residues A35–H37, D55, F84, D105, and Q112 contribute to the S-adenosyl-L-methionine site.

It belongs to the methyltransferase superfamily. RsmH family.

The protein localises to the cytoplasm. It carries out the reaction cytidine(1402) in 16S rRNA + S-adenosyl-L-methionine = N(4)-methylcytidine(1402) in 16S rRNA + S-adenosyl-L-homocysteine + H(+). In terms of biological role, specifically methylates the N4 position of cytidine in position 1402 (C1402) of 16S rRNA. This chain is Ribosomal RNA small subunit methyltransferase H, found in Streptococcus pneumoniae (strain ATCC 700669 / Spain 23F-1).